A 114-amino-acid chain; its full sequence is Macrophage migration inhibitory factor homolog (114 aa).

Proline 2 (proton acceptor; via imino nitrogen) is an active-site residue. Positions 33 and 98 each coordinate substrate.

The protein belongs to the MIF family.

The protein localises to the secreted. It catalyses the reaction L-dopachrome = 5,6-dihydroxyindole-2-carboxylate. It carries out the reaction 3-phenylpyruvate = enol-phenylpyruvate. Functionally, tautomerization of the methyl ester of L-dopachrome. Inhibits migration of human peripheral blood mononuclear cells. This Trichuris trichiura (Whipworm) protein is Macrophage migration inhibitory factor homolog.